A 145-amino-acid chain; its full sequence is Large ribosomal subunit protein uL11 (145 aa).

It belongs to the universal ribosomal protein uL11 family. In terms of assembly, part of the ribosomal stalk of the 50S ribosomal subunit. Interacts with L10 and the large rRNA to form the base of the stalk. L10 forms an elongated spine to which L12 dimers bind in a sequential fashion forming a multimeric L10(L12)X complex. One or more lysine residues are methylated.

Functionally, forms part of the ribosomal stalk which helps the ribosome interact with GTP-bound translation factors. The polypeptide is Large ribosomal subunit protein uL11 (Rickettsia peacockii (strain Rustic)).